Here is a 341-residue protein sequence, read N- to C-terminus: Basic membrane protein D (341 aa).

A signal peptide spans Met1–Ala16. Cys17 is lipidated: N-palmitoyl cysteine. The S-diacylglycerol cysteine moiety is linked to residue Cys17.

This sequence belongs to the BMP lipoprotein family. As to quaternary structure, monomer.

Its subcellular location is the cell inner membrane. Its function is as follows. Binds adenosine and inosine. May be part of an ABC-type nucleoside uptake system involved in the purine salvage pathway. The protein is Basic membrane protein D of Borreliella burgdorferi (strain JD1) (Borrelia burgdorferi).